Consider the following 512-residue polypeptide: MARAVHRSGLVALGIATALMASCAFAAKNVVVAVGSNFTTLDPYDANDTLSQAVAKSFYQGLFGLDKEMKLKNVLAESYTVSDDGLTYTVKLREGIKFQDGTDFNAAAVKANLDRASDPANHLKRYNLYKNIAKTEAIDPTTVKITLKQPFSAFINILAHPATAMISPAALEKYGKEIGFHPVGTGPYELDTWNQTDFVKVKKFVGYWQPGLPKLDSITWRPVADNNTRAAMLQTGEAQFAFPIPYEQAALLEKNKNIELMASPSIMQRYISMNVTQKPFDNPKVREALNYAINRPALVKVAFAGYATPATGVVPPSIAYAQSYKPWPYDPVKARELLKKAGYPNGFSTTLWSSHNHSTAQKVLQFTQQQLAQVGIKAQVTAMDAGQRAAEVEGKGQKESGVRMFYTGWSASTGEADWALSPLFASQNWPPTLFNTAFYSNKQVDDFLAQALKTNDPAEKTRLYKAAQDIIWQESPWIPLVVEKLVSAHSKNLTGFWIMPDTGFSFEDADLQ.

An N-terminal signal peptide occupies residues 1–26 (MARAVHRSGLVALGIATALMASCAFA).

Belongs to the bacterial solute-binding protein 5 family. As to quaternary structure, the complex is composed of two ATP-binding proteins (GsiA), two transmembrane proteins (GsiC and GsiD) and a solute-binding protein (GsiB).

The protein resides in the periplasm. Its function is as follows. Part of the ABC transporter complex GsiABCD involved in glutathione import. Binds glutathione. In Escherichia coli O6:K15:H31 (strain 536 / UPEC), this protein is Glutathione-binding protein GsiB.